We begin with the raw amino-acid sequence, 426 residues long: Meiotically up-regulated gene 170 protein (426 aa).

Belongs to the arrestin family.

It is found in the cytoplasm. Its subcellular location is the nucleus. Its function is as follows. Has a role in meiosis. The chain is Meiotically up-regulated gene 170 protein (mug170) from Schizosaccharomyces pombe (strain 972 / ATCC 24843) (Fission yeast).